Reading from the N-terminus, the 255-residue chain is MNITAVIPARFASVRFPGKALAIIDGKPMIQHVYERTARASLVDSVIIATDDERIQQAVSVFGGVCRMTRNDHETGTDRLAEVAGTLSADIIVNVQGDEPLIAPEMIDQAIRPLLDDPSLRMATLKSRIRCLHDFLSPNVVKVVTDRDGNALYFSRSPLPFFRDKWQDLKDESFASGKLLCYKHVGLYVYRRDFLVEFAAMAPTFLETSEKLEQLRALENGARIRVVETEFESIGVDTPDDLVKARERFRAIQSK.

It belongs to the KdsB family.

Its subcellular location is the cytoplasm. The enzyme catalyses 3-deoxy-alpha-D-manno-oct-2-ulosonate + CTP = CMP-3-deoxy-beta-D-manno-octulosonate + diphosphate. It participates in nucleotide-sugar biosynthesis; CMP-3-deoxy-D-manno-octulosonate biosynthesis; CMP-3-deoxy-D-manno-octulosonate from 3-deoxy-D-manno-octulosonate and CTP: step 1/1. Its pathway is bacterial outer membrane biogenesis; lipopolysaccharide biosynthesis. Functionally, activates KDO (a required 8-carbon sugar) for incorporation into bacterial lipopolysaccharide in Gram-negative bacteria. In Pelobacter propionicus (strain DSM 2379 / NBRC 103807 / OttBd1), this protein is 3-deoxy-manno-octulosonate cytidylyltransferase.